Here is a 532-residue protein sequence, read N- to C-terminus: Cilia- and flagella-associated protein 97 (532 aa).

At serine 19 the chain carries Phosphoserine. 5 disordered regions span residues 28 to 83, 116 to 263, 306 to 333, 398 to 421, and 485 to 532; these read ETNS…PVEN, IPNR…TPDI, KAAKKGKEKHEPDVSSKSSSVLDSSLDH, LSRQAEKPGSKSTIPRSADHPPKL, and GQYS…TAWL. Positions 35–49 are enriched in basic and acidic residues; the sequence is KQNDDPKERIDKDTK. The span at 50–63 shows a compositional bias: polar residues; that stretch reads NVNSNTGMQTTENY. A compositionally biased stretch (basic and acidic residues) spans 67-82; sequence KGNERNVKFPPEHPVE. A compositionally biased stretch (acidic residues) spans 127–139; sequence GEDDYYTDGEESS. Threonine 133 carries the phosphothreonine modification. Phosphoserine is present on residues serine 138 and serine 139. Low complexity-rich tracts occupy residues 170 to 185 and 194 to 205; these read SSSSSSSLSSSSSGSG and DSHLSDSSPSSK. Phosphoserine is present on serine 218. Residues 227 to 239 show a composition bias toward polar residues; it reads IKSTETQPSSTTP. Residue serine 248 is modified to Phosphoserine. Over residues 253-263 the composition is skewed to polar residues; the sequence is TDVSPLSTPDI. A compositionally biased stretch (low complexity) spans 320–329; that stretch reads SSKSSSVLDS. A Phosphoserine modification is found at serine 330. The stretch at 374-450 forms a coiled coil; it reads GKNYSFTREE…ALLKRLEAVK (77 aa). Over residues 493-503 the composition is skewed to polar residues; it reads SRTSSATSGLS.

This sequence belongs to the CFAP97 family.

The polypeptide is Cilia- and flagella-associated protein 97 (Homo sapiens (Human)).